The primary structure comprises 103 residues: Cytotoxin-like protein TA-BMBGT3 (103 aa).

A signal peptide spans 1–21 (MKTLLLTLVVVTIICLDLGYT). 5 disulfides stabilise this stretch: cysteine 24–cysteine 45, cysteine 27–cysteine 37, cysteine 38–cysteine 72, cysteine 76–cysteine 90, and cysteine 91–cysteine 96.

It belongs to the three-finger toxin family. Ancestral subfamily. Orphan group XVII sub-subfamily. As to expression, expressed by the venom gland.

It is found in the secreted. This Bungarus multicinctus (Many-banded krait) protein is Cytotoxin-like protein TA-BMBGT3.